A 164-amino-acid polypeptide reads, in one-letter code: Phosphopantetheine adenylyltransferase (164 aa).

Substrate is bound at residue Ser9. ATP is bound by residues 9-10 (SF) and His17. Substrate-binding residues include Lys41, Leu73, and Lys87. ATP is bound by residues 88 to 90 (GLR), Glu98, and 122 to 128 (YSYLSSS).

It belongs to the bacterial CoaD family. Homohexamer. Mg(2+) is required as a cofactor.

It is found in the cytoplasm. The enzyme catalyses (R)-4'-phosphopantetheine + ATP + H(+) = 3'-dephospho-CoA + diphosphate. The protein operates within cofactor biosynthesis; coenzyme A biosynthesis; CoA from (R)-pantothenate: step 4/5. Reversibly transfers an adenylyl group from ATP to 4'-phosphopantetheine, yielding dephospho-CoA (dPCoA) and pyrophosphate. In Rhodococcus opacus (strain B4), this protein is Phosphopantetheine adenylyltransferase.